Here is a 27-residue protein sequence, read N- to C-terminus: Toxin TdII-4 (27 aa).

The 27-residue stretch at 1 to 27 folds into the LCN-type CS-alpha/beta domain; the sequence is KDGYLMEPNGCKLGCLTRPAKYCWXEE.

The protein belongs to the long (4 C-C) scorpion toxin superfamily. Sodium channel inhibitor family. Beta subfamily. As to expression, expressed by the venom gland.

The protein localises to the secreted. Beta toxins bind voltage-independently at site-4 of sodium channels (Nav) and shift the voltage of activation toward more negative potentials thereby affecting sodium channel activation and promoting spontaneous and repetitive firing. This toxin is active against mammals and also affects neuromuscular preparations of frog. The chain is Toxin TdII-4 from Tityus discrepans (Venezuelan scorpion).